Here is a 43-residue protein sequence, read N- to C-terminus: Protein PsbN (43 aa).

The helical transmembrane segment at 5-27 (TLVAISISCLLVSFTGYALYTAF) threads the bilayer.

This sequence belongs to the PsbN family.

It is found in the plastid. The protein resides in the chloroplast thylakoid membrane. May play a role in photosystem I and II biogenesis. In Cedrus deodara (Deodar cedar), this protein is Protein PsbN.